The following is a 166-amino-acid chain: Phospholipase A2 inhibitor clone 11 (166 aa).

The first 19 residues, 1 to 19 (MRLILLSGLLLLGIFLANG), serve as a signal peptide directing secretion. One can recognise a C-type lectin domain in the interval 46–161 (LKGSFLIVHK…CDDNLLVVCE (116 aa)). Disulfide bonds link Cys-83–Cys-160 and Cys-138–Cys-152. Asn-122 is a glycosylation site (N-linked (GlcNAc...) asparagine).

It belongs to the alpha-type phospholipase A2 inhibitor family. In terms of assembly, homotrimer; non-covalently linked. Expressed by the liver.

Its subcellular location is the secreted. Functionally, this phospholipase A2 inhibitor binds directly phospholipase A2 in the presence or absence of calcium. This chain is Phospholipase A2 inhibitor clone 11, found in Bothrops neuwiedi (Neuwied's lancehead).